Here is a 365-residue protein sequence, read N- to C-terminus: Probable G-protein coupled receptor 142 (365 aa).

Topologically, residues 1–66 are extracellular; that stretch reads MHLNSNPNSY…WPESPERSPC (66 aa). An N-linked (GlcNAc...) asparagine glycan is attached at N44. A helical membrane pass occupies residues 67–87; sequence VAGIIPVIYYSVLLSLGLPVA. Residues 88–102 lie on the Cytoplasmic side of the membrane; the sequence is LARLAARTRKPSYHY. Residues 103 to 123 form a helical membrane-spanning segment; that stretch reads LLALTASDIVTQVIIVFVGFL. Residues 124–140 lie on the Extracellular side of the membrane; it reads LQGAVLARQVPQAVVRT. A helical membrane pass occupies residues 141–161; sequence ANILEFAANHASVWIAVLFTV. Residues 162-185 lie on the Cytoplasmic side of the membrane; the sequence is DRYNALCRPLRHRATSSPGRTHRA. Residues 186-206 form a helical membrane-spanning segment; it reads IAAVIGVTLLTGIPFYWWLDV. The Extracellular portion of the chain corresponds to 207-224; it reads WRDADPPSTMDKLLKWAH. Residues 225-245 form a helical membrane-spanning segment; the sequence is CLIVYFIPCNVFLVTNSAIIL. At 246–264 the chain is on the cytoplasmic side; that stretch reads RLRKRGQRGLRPLVSKSTA. A helical transmembrane segment spans residues 265-285; it reads ILLGVTSLFALLWAPRIIVML. The Extracellular segment spans residues 286–304; sequence YHLYVAPVHRDWRVHLALD. The chain crosses the membrane as a helical span at residues 305–325; it reads IANMLAMLNTEVNFGLYCFIS. The Cytoplasmic portion of the chain corresponds to 326–365; the sequence is KTFRATVRQVICDVHMACALKSQPKQTVVELMLKSVGTEL.

Belongs to the G-protein coupled receptor 1 family.

It localises to the cell membrane. Functionally, orphan receptor. In Mus musculus (Mouse), this protein is Probable G-protein coupled receptor 142 (Gpr142).